Consider the following 101-residue polypeptide: Small ribosomal subunit protein uS14 (101 aa).

This sequence belongs to the universal ribosomal protein uS14 family. As to quaternary structure, part of the 30S ribosomal subunit. Contacts proteins S3 and S10.

Its function is as follows. Binds 16S rRNA, required for the assembly of 30S particles and may also be responsible for determining the conformation of the 16S rRNA at the A site. The sequence is that of Small ribosomal subunit protein uS14 from Kocuria rhizophila (strain ATCC 9341 / DSM 348 / NBRC 103217 / DC2201).